Consider the following 234-residue polypeptide: Triggering receptor expressed on myeloid cells 1 (234 aa).

A signal peptide spans 1 to 20; sequence MRKTRLWGLLWMLFVSELRA. Over 21 to 205 the chain is Extracellular; it reads ATKLTEEKYE…TDIIRVPVFN (185 aa). The region spanning 26 to 134 is the Ig-like V-type domain; that stretch reads EEKYELKEGQ…LFDRIRLVVT (109 aa). An intrachain disulfide couples Cys41 to Cys113. N-linked (GlcNAc...) asparagine glycans are attached at residues Asn146, Asn191, and Asn194. The chain crosses the membrane as a helical span at residues 206–226; sequence IVILLAGGFLSKSLVFSVLFA. The Cytoplasmic portion of the chain corresponds to 227 to 234; that stretch reads VTLRSFVP.

Monomer. Homomultimer; when activated. Interacts with TYROBP/DAP12. Interacts with TLR4. Post-translationally, glycosylated. Mostly expressed by immune cells of the myeloid lineage, such as monocytes, macrophages, neutrophils and dendritic cells. Expression is associated with a mature stage of myeloid development. Highly expressed in adult liver, lung and spleen than in corresponding fetal tissue. Also expressed in the lymph node, placenta, spinal cord and heart tissues. Isoform 2 was detected in the lung, liver and mature monocytes.

The protein resides in the cell membrane. It is found in the secreted. In terms of biological role, cell surface receptor that plays important roles in innate and adaptive immunity by amplifying inflammatory responses. Upon activation by various ligands such as PGLYRP1, HMGB1 or HSP70, multimerizes and forms a complex with transmembrane adapter TYROBP/DAP12. In turn, initiates a SYK-mediated cascade of tyrosine phosphorylation, activating multiple downstream mediators such as BTK, MAPK1, MAPK3 or phospholipase C-gamma. This cascade promotes the neutrophil- and macrophage-mediated release of pro-inflammatory cytokines and/or chemokines, as well as their migration and thereby amplifies inflammatory responses that are triggered by bacterial and fungal infections. By also promoting the amplification of inflammatory signals that are initially triggered by Toll-like receptor (TLR) and NOD-like receptor engagement, plays a major role in the pathophysiology of acute and chronic inflammatory diseases of different etiologies including septic shock and atherosclerosis. Acts as a decoy receptor, counterbalancing TREM1 pro-inflammatory activity through the neutralization of its ligand. This Homo sapiens (Human) protein is Triggering receptor expressed on myeloid cells 1 (TREM1).